The chain runs to 161 residues: Protein-lysine N-methyltransferase (161 aa).

Positions 34–40 (DLGCGDG) match the DxGxGxG SAM-binding motif motif.

This sequence belongs to the class I-like SAM-binding methyltransferase superfamily. Monomer.

The enzyme catalyses L-lysyl-[protein] + S-adenosyl-L-methionine = N(6)-methyl-L-lysyl-[protein] + S-adenosyl-L-homocysteine + H(+). In terms of biological role, catalyzes the methylation of lysine residues in target proteins, using S-adenosyl-L-methionine (SAM) as the methyl donor. Exhibits broad substrate specificity, being able to methylate the crenarchaeal chromatin protein Cren7 primarily at 'Lys-11', 'Lys-16' and 'Lys-31', as well as a number of recombinant Sulfolobus proteins in vitro. Methylates lysine residues in a rather sequence-independent manner. The polypeptide is Protein-lysine N-methyltransferase (Saccharolobus islandicus (strain REY15A) (Sulfolobus islandicus)).